The following is a 220-amino-acid chain: Redox-sensing transcriptional repressor Rex (220 aa).

Positions Trp-25–Val-64 form a DNA-binding region, H-T-H motif. Gly-99–Gly-104 lines the NAD(+) pocket.

This sequence belongs to the transcriptional regulatory Rex family. In terms of assembly, homodimer.

It is found in the cytoplasm. Functionally, modulates transcription in response to changes in cellular NADH/NAD(+) redox state. The polypeptide is Redox-sensing transcriptional repressor Rex (Bacteroides thetaiotaomicron (strain ATCC 29148 / DSM 2079 / JCM 5827 / CCUG 10774 / NCTC 10582 / VPI-5482 / E50)).